Consider the following 332-residue polypeptide: Large ribosomal subunit protein mL44 (332 aa).

A mitochondrion-targeting transit peptide spans 1–30 (MASGLVRLLQQGPRCLLAPVAPKLVPPVRG). The RNase III domain maps to 86–228 (DLLKTAFVNS…LITQMTGKEL (143 aa)). A DRBM domain is found at 236-306 (NPMGLLVEEL…ARVALRKLYG (71 aa)).

It belongs to the ribonuclease III family. Mitochondrion-specific ribosomal protein mL44 subfamily. Component of the mitochondrial ribosome large subunit (39S) which comprises a 16S rRNA and about 50 distinct proteins.

It localises to the mitochondrion. Component of the 39S subunit of mitochondrial ribosome. May have a function in the assembly/stability of nascent mitochondrial polypeptides exiting the ribosome. The polypeptide is Large ribosomal subunit protein mL44 (MRPL44) (Pongo abelii (Sumatran orangutan)).